Here is a 210-residue protein sequence, read N- to C-terminus: Guanylate kinase (210 aa).

The Guanylate kinase-like domain occupies 8-188 (GNLFIIAAPS…SLASLEHIVL (181 aa)). Residue 15-22 (APSGAGKS) coordinates ATP.

Belongs to the guanylate kinase family.

The protein resides in the cytoplasm. The enzyme catalyses GMP + ATP = GDP + ADP. Its function is as follows. Essential for recycling GMP and indirectly, cGMP. This Idiomarina loihiensis (strain ATCC BAA-735 / DSM 15497 / L2-TR) protein is Guanylate kinase.